The primary structure comprises 150 residues: Endoribonuclease YbeY (150 aa).

Residues histidine 112, histidine 116, and histidine 122 each coordinate Zn(2+).

Belongs to the endoribonuclease YbeY family. Zn(2+) serves as cofactor.

It localises to the cytoplasm. In terms of biological role, single strand-specific metallo-endoribonuclease involved in late-stage 70S ribosome quality control and in maturation of the 3' terminus of the 16S rRNA. In Geobacter metallireducens (strain ATCC 53774 / DSM 7210 / GS-15), this protein is Endoribonuclease YbeY.